A 391-amino-acid chain; its full sequence is D-alanine--D-alanine ligase (391 aa).

Positions 1–24 (MSSENLPQSPERAESPQAPRRKPR) are disordered. Residues 171 to 381 (KRVFLSFGLP…YPELVDRLIQ (211 aa)) enclose the ATP-grasp domain. 207 to 262 (AGEHGWPLFIKPARGGSSMGITKVDSVEGLDAAIEEARRHDPKFLVESLLRGREIE) contributes to the ATP binding site. Residues Asp335, Glu348, and Asn350 each coordinate Mg(2+).

It belongs to the D-alanine--D-alanine ligase family. Requires Mg(2+) as cofactor. Mn(2+) serves as cofactor.

It localises to the cytoplasm. The enzyme catalyses 2 D-alanine + ATP = D-alanyl-D-alanine + ADP + phosphate + H(+). It functions in the pathway cell wall biogenesis; peptidoglycan biosynthesis. Functionally, cell wall formation. The chain is D-alanine--D-alanine ligase from Streptomyces griseus subsp. griseus (strain JCM 4626 / CBS 651.72 / NBRC 13350 / KCC S-0626 / ISP 5235).